A 355-amino-acid chain; its full sequence is MIDKLEAIEKKYEEVSKQIVDPSIMADMKQYASLNKTYKELSKIVDVYTVYKSNLANLESAKTLLSIEKDAAFRDLAKEEIDSLELQKTQLEEDLKFLLLPKDPNDSKNVILEIRAGTGGDEAGIFAGDLFRMYSRFAEKMQWKLSIIEEVESTSGGYKEIICSIAGEGAYGMLKYESGVHRVQRVPATETQGRIHTSAASVVVLPEMDEVEVDLDMNDIRKDTFCSSGPGGQSVNTTYSAIRLTHIPTGIVVSCQDEKSQIKNLEKALKVLRARLYEQELKKQQDAIGAERRSMVKSGDRSDKIRTYNFPQGRVTDHRIGYTIHNLPAVMDGAVGDLIEALQLADNAERLQQGA.

At Q233 the chain carries N5-methylglutamine.

The protein belongs to the prokaryotic/mitochondrial release factor family. Methylated by PrmC. Methylation increases the termination efficiency of RF1.

The protein localises to the cytoplasm. Functionally, peptide chain release factor 1 directs the termination of translation in response to the peptide chain termination codons UAG and UAA. The sequence is that of Peptide chain release factor 1 from Amoebophilus asiaticus (strain 5a2).